A 394-amino-acid chain; its full sequence is MPSRNILVINCGSSSIKFALVNEAHSLFPLHGLAERLGSRDAVLRWKRGGDSDSLMIPNADHRAALAQLLPMVQNAAGGKLHGIGHRVVHGGELFTHATRIDDRVVEAIRATAPLAPLHNPANLQGIEAAMTLFPKLPHVAVFDTAFHQSLPEHAYRYALPEALYREHGVRRYGFHGTSHRYVSHRAAEMAGLAVGDSSWLSAHLGNGSSTCAIVNGQSLDTSMGLTPLEGLVMGTRSGDVDPNLHSHLARTLGWSLERIDSMLNNESGLLGLSDLSNDMRTLEQEREQGHPGAALAIEVFCYRLAKSLAAMSCALPQLDGVIFTGGIGENSPLVRAKTAAHLRLFDLRLDQEANARCVRGVAGPIQAAGHPRVLVIPTNEERQIALDTLALLD.

Asn10 contributes to the Mg(2+) binding site. Lys17 lines the ATP pocket. Position 87 (Arg87) interacts with substrate. The Proton donor/acceptor role is filled by Asp144. ATP contacts are provided by residues 204–208, 279–281, and 327–331; these read HLGNG, DMR, and GIGEN. Glu381 is a Mg(2+) binding site.

The protein belongs to the acetokinase family. As to quaternary structure, homodimer. The cofactor is Mg(2+). Mn(2+) is required as a cofactor.

It is found in the cytoplasm. The enzyme catalyses acetate + ATP = acetyl phosphate + ADP. The protein operates within metabolic intermediate biosynthesis; acetyl-CoA biosynthesis; acetyl-CoA from acetate: step 1/2. Functionally, catalyzes the formation of acetyl phosphate from acetate and ATP. Can also catalyze the reverse reaction. In Pseudomonas aeruginosa (strain LESB58), this protein is Acetate kinase.